A 509-amino-acid chain; its full sequence is Legumin A (509 aa).

The first 21 residues, Met1 to Ala21, serve as a signal peptide directing secretion. Disulfide bonds link Cys34–Cys67 and Cys110–Cys331. The Cupin type-1 1 domain maps to Leu39–Arg273. Disordered stretches follow at residues Ala187–Ser248 and Pro298–Gly325. The span at Glu212 to Asp228 shows a compositional bias: acidic residues. The span at Arg299–Tyr314 shows a compositional bias: basic and acidic residues. Residues Glu337–Arg486 enclose the Cupin type-1 2 domain.

This sequence belongs to the 11S seed storage protein (globulins) family. Hexamer; each subunit is composed of an acidic and a basic chain derived from a single precursor and linked by a disulfide bond.

This is a seed storage protein. This chain is Legumin A (LEGA), found in Gossypium hirsutum (Upland cotton).